The chain runs to 577 residues: Probable L-gulonolactone oxidase 4 (577 aa).

A signal peptide spans 1–17 (MSFWLSLIFCFFTFASS). Residues 46 to 228 (SICKAAKVEY…SQVTFELQPM (183 aa)) form the FAD-binding PCMH-type domain.

The protein belongs to the oxygen-dependent FAD-linked oxidoreductase family. FAD serves as cofactor.

The catalysed reaction is L-gulono-1,4-lactone + O2 = L-ascorbate + H2O2 + H(+). Its pathway is cofactor biosynthesis; L-ascorbate biosynthesis. May be involved in the biosynthesis of ascorbic acid. This chain is Probable L-gulonolactone oxidase 4, found in Arabidopsis thaliana (Mouse-ear cress).